The chain runs to 24 residues: Heptapoietin A light chain (24 aa).

Heterodimer of a heavy and a light chain linked by disulfide bond(s).

Functionally, HPTA is an acidic heparin-binding growth factor for hepatocytes. The polypeptide is Heptapoietin A light chain (Oryctolagus cuniculus (Rabbit)).